The following is a 333-amino-acid chain: MSAETPPCQLLERQSEAYRDWLWVAPPHDAWLHTVGGSVWSADATICQAWRARGRPVHADLAPTLTAPVPGAVLFWPKTHALGEWWLLALCAALPEGTPLQVVGEHQGGVKRVLKSLAALGLGCRKVDSARRCTLYATRTARLALSPEAAWTRFEAAGLTLESHPGVFGHGKLDDGTRQLLEVLPTALGDPAGQRVLDVGCGDGILGAWLGVRGAQVAAVDLDAFAVAATRRTFQANGVAGEAWQSDVFGDVSGSYDAIVSNPPFHQQRAIDYGPAERLIREAPARLVPGGRLVLVANAFLPYPRWLEDAFGEFTVLADDRRFRVYQAVKTRR.

It belongs to the methyltransferase superfamily. RsmC family. Monomer.

Its subcellular location is the cytoplasm. It catalyses the reaction guanosine(1207) in 16S rRNA + S-adenosyl-L-methionine = N(2)-methylguanosine(1207) in 16S rRNA + S-adenosyl-L-homocysteine + H(+). Specifically methylates the guanine in position 1207 of 16S rRNA in the 30S particle. The chain is Ribosomal RNA small subunit methyltransferase C from Chromohalobacter salexigens (strain ATCC BAA-138 / DSM 3043 / CIP 106854 / NCIMB 13768 / 1H11).